Reading from the N-terminus, the 935-residue chain is C-1-tetrahydrofolate synthase, cytoplasmic (935 aa).

Met1 carries the N-acetylmethionine modification. Positions 2–291 are methylenetetrahydrofolate dehydrogenase and methenyltetrahydrofolate cyclohydrolase (D/C) domain; the sequence is APAGILNGKV…MLMQSTVESA (290 aa). Substrate-binding positions include 52-56 and 99-101; these read YINVK and VQL. Lys56 is a catalytic residue. Residues 172 to 174 and Ser197 each bind NADP(+); that span reads GRS. Residue 272–276 participates in substrate binding; that stretch reads PGGVG. The tract at residues 310-935 is formyltetrahydrofolate synthetase domain; sequence LNLKTPVPSD…PETEQVNGLF (626 aa). Ser318 bears the Phosphoserine mark. Residue 380-387 participates in ATP binding; it reads TPLGEGKS. Phosphoserine occurs at positions 413 and 490.

This sequence in the N-terminal section; belongs to the tetrahydrofolate dehydrogenase/cyclohydrolase family. The protein in the C-terminal section; belongs to the formate--tetrahydrofolate ligase family. As to quaternary structure, homodimer.

The protein resides in the cytoplasm. The catalysed reaction is (6R)-5,10-methylene-5,6,7,8-tetrahydrofolate + NADP(+) = (6R)-5,10-methenyltetrahydrofolate + NADPH. It catalyses the reaction (6R)-5,10-methenyltetrahydrofolate + H2O = (6R)-10-formyltetrahydrofolate + H(+). It carries out the reaction (6S)-5,6,7,8-tetrahydrofolate + formate + ATP = (6R)-10-formyltetrahydrofolate + ADP + phosphate. It functions in the pathway one-carbon metabolism; tetrahydrofolate interconversion. In terms of biological role, trifunctional enzyme that catalyzes the interconversion of three forms of one-carbon-substituted tetrahydrofolate: (6R)-5,10-methylene-5,6,7,8-tetrahydrofolate, 5,10-methenyltetrahydrofolate and (6S)-10-formyltetrahydrofolate. These derivatives of tetrahydrofolate are differentially required in nucleotide and amino acid biosynthesis, (6S)-10-formyltetrahydrofolate being required for purine biosynthesis while (6R)-5,10-methylene-5,6,7,8-tetrahydrofolate is used for serine and methionine biosynthesis for instance. In Rattus norvegicus (Rat), this protein is C-1-tetrahydrofolate synthase, cytoplasmic (Mthfd1).